The sequence spans 322 residues: HPr kinase/phosphorylase (322 aa).

Active-site residues include histidine 146 and lysine 167. 161 to 168 is an ATP binding site; it reads GDSGLGKS. Serine 168 contacts Mg(2+). Aspartate 185 serves as the catalytic Proton acceptor; for phosphorylation activity. Proton donor; for dephosphorylation activity. The tract at residues 209–218 is important for the catalytic mechanism of both phosphorylation and dephosphorylation; the sequence is LEVRGLGLLD. Glutamate 210 lines the Mg(2+) pocket. Arginine 250 is a catalytic residue. Residues 271–276 are important for the catalytic mechanism of dephosphorylation; sequence QVAAGR.

Belongs to the HPrK/P family. Homohexamer. Mg(2+) serves as cofactor.

It catalyses the reaction [HPr protein]-L-serine + ATP = [HPr protein]-O-phospho-L-serine + ADP + H(+). The catalysed reaction is [HPr protein]-O-phospho-L-serine + phosphate + H(+) = [HPr protein]-L-serine + diphosphate. In terms of biological role, catalyzes the ATP- as well as the pyrophosphate-dependent phosphorylation of a specific serine residue in HPr, a phosphocarrier protein of the phosphoenolpyruvate-dependent sugar phosphotransferase system (PTS). HprK/P also catalyzes the pyrophosphate-producing, inorganic phosphate-dependent dephosphorylation (phosphorolysis) of seryl-phosphorylated HPr (P-Ser-HPr). In Burkholderia mallei (strain NCTC 10247), this protein is HPr kinase/phosphorylase.